The following is a 679-amino-acid chain: Glycine--tRNA ligase beta subunit (679 aa).

Belongs to the class-II aminoacyl-tRNA synthetase family. In terms of assembly, tetramer of two alpha and two beta subunits.

Its subcellular location is the cytoplasm. The enzyme catalyses tRNA(Gly) + glycine + ATP = glycyl-tRNA(Gly) + AMP + diphosphate. The polypeptide is Glycine--tRNA ligase beta subunit (Streptococcus pyogenes serotype M1).